Reading from the N-terminus, the 2273-residue chain is KGKTITHGQSWGARRIHSHFYITIFTITCIRIGQYKLALYLDPYRFYNITGSQIVRLKGQRPEYRKRIFAHSYRHSSRIGLNFPSRRRYSNYVDRGNIHKHTRLPPQFIGLNTVESAQPSILRDFVDLRGGHTVISKILIANNGIAAVKEMRSIRKWAYETFNDEKIIQFVVMATPDDLHANSEYIRMADQYVQVPGGTNNNNYANIDLILDVAEQTDVDAVWAGWGHASENPCLPELLASSQRKILFIGPPGRAMRSLGDKISSTIVAQSAKIPCIPWSGSHIDTIHIDNKTNFVSVPDDVYVRGCCSSPEDALEKAKLIGFPVMIKASEGGGGKGIRRVDNEDDFIALYRQAVNETPGSPMFVMKVVTDARHLEVQLLADQYGTNITLFGRDCSIQRRHQKIIEEAPVTITKPETFQRMERAAIRLGELVGYVSAGTVEYLYSPKDDKFYFLELNPRLQVEHPTTEMISGVNLPATQLQIAMGIPMHMISDIRKLYGLDPTGTSYIDFKNLKRPSPKGHCISCRITSEDPNEGFKPSTGKIHELNFRSSSNVWGYFSVGNNGAIHSFSDSQFGHIFAVGNDRQDAKQNMVLALKDFSIRGEFKTPIEYLIELLETRDFESNNISTGWLDDLILKNLSSDSKLDPTLAIICGAAMKAYVFTEKVRNKYLELLRRGQVPPKDFLKTKFPVDFIFDNNRYLFNVAQSSEEQFILSINKSQCEVNVQKLSGDCLLISVDGKCHTVYWKDDIRGTRLSIDSNTIFLEAELNPTQVISPTPGKLVKYLVRSGDHVFAGQQYAEIEIMKMQMPLVAKSDGVIELLRQPGSIIEAGDVIAKLTLDSPSKANESSLYRGELPVLGPPLIEGSRPNHKLRVLINRLENILNGYHENSGIETTLKELIKILRDGRLPYSEWDSQISTVRNRLPRQLNEGLGNLVKKSVSFPAKELHKLMKRYLEENTNDHVVYVALQPLLKISERYSEGLANHECEIFLKLIKKYYAVEKIFENHDIHEERNLLNLRRKDLTNLKEILCISLSHANVVAKNKLVTAILHEYEPLCQDSSKMSLKFRAVIHDLASLESKWAKEVAVKARSVLLRGIFPPIKKRKEHIKTLLQLHIKDTGAENIHSRNIYSCMRDFGNLIHSNLIQLQDLFFFFGHQDTALSSIASEIYARYAYGNYQLKSIKIHKGAPDLLMSWQFSSLRNYLVNPDGESDEFTKLSKPPSTSGKSSANSFGLLVNMRALESLEKTLDEVYEQIHIPEERLSSGENSLIVNILSPIRYRSENDLIKTLKIKLHENERGLSKLKVNRITFAFIAANAPTVKFYSFDGTTYDEISQIRNMDPSYEAPLELGKMSNYKIRSLPTYDSSIRIFEGISKFTPLDKRFFVRKIINSSMYNDQKTTEENLKAEINAQVVYMLEHLGAVDTSNSDLNHIFLSFNTVLNIPVHRLEEIVSTILKTHETRLFQERITDVEICISVECLETKKPAPLRLLISNKSGYVVKIETYYEKIGKNGNLILEPCSEQSHYSQKSLSLPYSVKDWLQPKRYKAQFMGTTYVYDFPGLFHQAAIQQWKRYFPKHKLNDSFFSWVELIEQNGNLIKVNREPGLNNIGMVAFEIMVQTPEYPEGRNMIVISNDITYNIGSFGPREDLFFDRVTNYARERGIPRIYLAANSGAKLGIAEELIPLFRVAWNDPSDPTKGFQYLYLAPKDMQLLKDYGKGNSVVVEHKMVYGEERYIIKAIVGFEEGLGVECLQGSGLIAGATSKAYRDIFTITAVTCRSVGIGSYLVRLGQRTIQVEDKPIILTGASAINKVLGTDIYTSNLQIGGTQIMYKNGIAHLTAGNDMKAIEKIMTWLSYVPAKRDMSPPLLETMDRWDRDVDFKPAKQVPYEARWLIEGKWDSNNNFQSGLFDKDSFFETLSGWAKGVIVGRARLGGIPVGVIAVETKTIEEIIPADPANLDSSEFSVKEAGQVWYPNSAFKTAQTINDFNYGEQLPLIILANWRGFSGGQRDMYNEVLKYGSFIVDALVDYKQPILIYIPPFGELRGGSWVVIDPTINPEQMEMYADVESRGGVLEPDGVVSIKYRKEKMIETMIRLDSTYGHLRRTLTEKKLSLEKQNDLTKRLKIRERQLIPIYNQISIQFADLHDRSTRMLVKGVIRKELEWKKSRRFLYWRLRRRLNEGQVIKRLQKKTCDNKTKMKYDDLLKIVQSWYNDLDVNDDRAVVEFIERNSKKIDKNIEEFEISLLIDELKKKFEDRRGNIVLEELTRLVDSKRKR.

The transit peptide at 1–104 (KGKTITHGQS…RGNIHKHTRL (104 aa)) directs the protein to the mitochondrion. In terms of domain architecture, Biotin carboxylation spans 134–635 (VISKILIANN…STGWLDDLIL (502 aa)). In terms of domain architecture, ATP-grasp spans 292–484 (KTNFVSVPDD…LPATQLQIAM (193 aa)). 332 to 337 (GGGGKG) contacts ATP. Residue R459 is part of the active site. In terms of domain architecture, Biotinyl-binding spans 763-837 (LEAELNPTQV…EAGDVIAKLT (75 aa)). The residue at position 804 (K804) is an N6-biotinyllysine. Positions 1532–1867 (PYSVKDWLQP…KRDMSPPLLE (336 aa)) constitute a CoA carboxyltransferase N-terminal domain. A carboxyltransferase region spans residues 1532–2187 (PYSVKDWLQP…EGQVIKRLQK (656 aa)). CoA contacts are provided by R1776, K2080, and R2082. The region spanning 1871-2187 (RWDRDVDFKP…EGQVIKRLQK (317 aa)) is the CoA carboxyltransferase C-terminal domain.

The cofactor is biotin.

It localises to the mitochondrion. The enzyme catalyses hydrogencarbonate + acetyl-CoA + ATP = malonyl-CoA + ADP + phosphate + H(+). It catalyses the reaction N(6)-biotinyl-L-lysyl-[protein] + hydrogencarbonate + ATP = N(6)-carboxybiotinyl-L-lysyl-[protein] + ADP + phosphate + H(+). It functions in the pathway lipid metabolism; malonyl-CoA biosynthesis; malonyl-CoA from acetyl-CoA: step 1/1. In terms of biological role, catalyzes the rate-limiting reaction in the mitochondrial fatty acid synthesis (FAS) type II pathway. Responsible for the production of the mitochondrial malonyl-CoA, used for the biosynthesis of the cofactor lipoic acid. This protein carries three functions: biotin carboxyl carrier protein, biotin carboxylase, and carboxyltransferase. This Saccharomyces cerevisiae (strain YJM789) (Baker's yeast) protein is Acetyl-CoA carboxylase, mitochondrial (HFA1).